The following is a 215-amino-acid chain: N-(5'-phosphoribosyl)anthranilate isomerase (215 aa).

The protein belongs to the TrpF family.

The catalysed reaction is N-(5-phospho-beta-D-ribosyl)anthranilate = 1-(2-carboxyphenylamino)-1-deoxy-D-ribulose 5-phosphate. It functions in the pathway amino-acid biosynthesis; L-tryptophan biosynthesis; L-tryptophan from chorismate: step 3/5. The polypeptide is N-(5'-phosphoribosyl)anthranilate isomerase (Parvibaculum lavamentivorans (strain DS-1 / DSM 13023 / NCIMB 13966)).